Here is a 69-residue protein sequence, read N- to C-terminus: Guanine nucleotide-binding protein G(I)/G(S)/G(O) subunit gamma-T2 (69 aa).

Cys66 is modified (cysteine methyl ester). The S-farnesyl cysteine moiety is linked to residue Cys66. Positions 67-69 (LIS) are cleaved as a propeptide — removed in mature form.

Belongs to the G protein gamma family. As to quaternary structure, g proteins are composed of 3 units, alpha, beta and gamma. As to expression, retinal cones.

It localises to the cell membrane. In terms of biological role, guanine nucleotide-binding proteins (G proteins) are involved as a modulator or transducer in various transmembrane signaling systems. The beta and gamma chains are required for the GTPase activity, for replacement of GDP by GTP, and for G protein-effector interaction. This chain is Guanine nucleotide-binding protein G(I)/G(S)/G(O) subunit gamma-T2 (GNGT2), found in Homo sapiens (Human).